The primary structure comprises 961 residues: MPVFHTKTIESILDPVAQQVSRLVILHEEAEDGNAMPDLSRPVQVVSAAVANLVKVGRDTINSSDDKILRQDMPSALHRVEGASQLLEEASDMLRSDPYSGPARKKLIEGSRGILQGTSSLLLCFDESEVRKIIQECKRVLDYLAVAEVINTMEQLVQFLKDLSPCLSKVHREVGAREKELTHQVHSEILVRCLEQVKTLAPILICSMKVYIHIVEQQGRGAEEAAENRNYLAARMSDELQEIIRVLQLTTYDEDTSELDNLTVLKKLSNAISNKMEQANEWLSNPYALRGGVGEKALRQVIDNATEISERCLPQDSYPIRKLADEVTAMANTLCELRQEGKGQSPQAESLVRGIRDRMGELKSLVHQAVLGVDKAGVQQTAHTIQGRLEQAVKWLQHPEINDGGLGERAINLIVEEGRKVAEGCPGHQKAEIQQLCDEVERLKRQAAGSGPAAKQAAKQLTQKLYELKAAIQNALVNRIVQDFMDVSTPLKQFTEAVLQPEGTPGREQNFNQKSNNLQAFSDRASKTSRMVAAGGACGNKKIAEILLSSAAQVDSLTPQLISAGRIRMNYPGSKAADEHLQNLKQQYADTVLRMRTLCDQATDPADFIKTSEEHMQVYAKLCEDAIHARQPQKMVDNTSNIARLINRVLLVAKQEADNSEDPVFTERLNAAANRLERSLPAMVGDAKLVATNIADPAAAAAWKNSFQRLLGDVREVRDAIAPPQPPPLPTSLPPPIPELSALHLSNQNAERAPPRPPLPREGLAPVRPPPPETDDEDEGVFRTMPHANQPILIAARGLHQEVRQWSSKDNEIIAAAKRMAILMARLSELVLSDSRGSKRELIATAKKIAEASEDVTRLAKELARQCTDRRIRTNLLQVCERIPTIGTQLKILSTVKATMLGAQGSDEDREATEMLVGNAQNLMQSVKETVRAAEGASIKIRSDQTSNRLQWVRRQPWYQY.

2 repeat units span residues 258-362 and 371-470. Residues 258–470 are 2 X repeats; that stretch reads ELDNLTVLKK…LTQKLYELKA (213 aa). Residues 720–778 form a disordered region; sequence AIAPPQPPPLPTSLPPPIPELSALHLSNQNAERAPPRPPLPREGLAPVRPPPPETDDED. Over residues 723–738 the composition is skewed to pro residues; the sequence is PPQPPPLPTSLPPPIP. The residue at position 774 (threonine 774) is a Phosphothreonine.

It belongs to the vinculin/alpha-catenin family. As to quaternary structure, exhibits self-association properties.

It localises to the cytoplasm. It is found in the cytoskeleton. The protein resides in the cell junction. The protein localises to the adherens junction. Its subcellular location is the cell membrane. Involved in cell adhesion. May be involved in the attachment of the actin-based microfilaments to the plasma membrane. This chain is Vinculin (Vinc), found in Drosophila melanogaster (Fruit fly).